The sequence spans 227 residues: Cytidylate kinase (227 aa).

12 to 20 contributes to the ATP binding site; it reads GPSGAGKGT.

This sequence belongs to the cytidylate kinase family. Type 1 subfamily.

The protein localises to the cytoplasm. It catalyses the reaction CMP + ATP = CDP + ADP. The enzyme catalyses dCMP + ATP = dCDP + ADP. The chain is Cytidylate kinase from Shigella boydii serotype 4 (strain Sb227).